A 288-amino-acid chain; its full sequence is 2-hydroxy-6-oxononadienedioate/2-hydroxy-6-oxononatrienedioate hydrolase (288 aa).

The active-site Proton acceptor is His267.

It belongs to the AB hydrolase superfamily. MhpC family. As to quaternary structure, homodimer.

The catalysed reaction is (2Z,4E)-2-hydroxy-6-oxonona-2,4-dienedioate + H2O = (2Z)-2-hydroxypenta-2,4-dienoate + succinate + H(+). It carries out the reaction (2Z,4E,7E)-2-hydroxy-6-oxonona-2,4,7-trienedioate + H2O = (2Z)-2-hydroxypenta-2,4-dienoate + fumarate + H(+). Its pathway is aromatic compound metabolism; 3-phenylpropanoate degradation. Functionally, catalyzes the cleavage of the C5-C6 bond of 2-hydroxy-6-oxononadienedioate and 2-hydroxy-6-oxononatrienedioate, a dienol ring fission product of the bacterial meta-cleavage pathway for degradation of phenylpropionic acid. The sequence is that of 2-hydroxy-6-oxononadienedioate/2-hydroxy-6-oxononatrienedioate hydrolase from Escherichia coli (strain K12 / DH10B).